The primary structure comprises 138 residues: MVIIKKTHNSFSLKHRHCNHTLKFGRLGLKILSFSKITENQFNLIERLSLKFLKNLSGNKKLIKIWSLVPFNLTLTKLSSEARMGKGKGAVYSRAFFLRPGSILFEFEGVSKHQLTQISSILRKKTSFRIVEVQLPSK.

The protein belongs to the universal ribosomal protein uL16 family.

Its subcellular location is the mitochondrion. This is Large ribosomal subunit protein uL16m (RPL16) from Chondrus crispus (Carrageen Irish moss).